The sequence spans 205 residues: Small ribosomal subunit protein uS2 (205 aa).

It belongs to the universal ribosomal protein uS2 family.

The chain is Small ribosomal subunit protein uS2 from Methanoculleus marisnigri (strain ATCC 35101 / DSM 1498 / JR1).